The chain runs to 188 residues: dCTP deaminase (188 aa).

Residues 111-116 (KSTYAR), 135-137 (TLE), glutamine 156, tyrosine 170, and glutamine 180 contribute to the dCTP site. The Proton donor/acceptor role is filled by glutamate 137.

This sequence belongs to the dCTP deaminase family. As to quaternary structure, homotrimer.

It catalyses the reaction dCTP + H2O + H(+) = dUTP + NH4(+). It functions in the pathway pyrimidine metabolism; dUMP biosynthesis; dUMP from dCTP (dUTP route): step 1/2. Functionally, catalyzes the deamination of dCTP to dUTP. The protein is dCTP deaminase of Pseudomonas fluorescens (strain Pf0-1).